Here is a 237-residue protein sequence, read N- to C-terminus: Proteasome subunit alpha type-5-A (237 aa).

The residue at position 1 (Met1) is an N-acetylmethionine. Residues Lys43 and Lys66 each participate in a glycyl lysine isopeptide (Lys-Gly) (interchain with G-Cter in ubiquitin) cross-link.

Belongs to the peptidase T1A family. Component of the 20S core complex of the 26S proteasome. The 26S proteasome is composed of a core protease (CP), known as the 20S proteasome, capped at one or both ends by the 19S regulatory particle (RP/PA700). The 20S proteasome core is composed of 28 subunits that are arranged in four stacked rings, resulting in a barrel-shaped structure. The two end rings are each formed by seven alpha subunits, and the two central rings are each formed by seven beta subunits. The catalytic chamber with the active sites is on the inside of the barrel.

It localises to the cytoplasm. The protein resides in the nucleus. The proteasome is a multicatalytic proteinase complex which is characterized by its ability to cleave peptides with Arg, Phe, Tyr, Leu, and Glu adjacent to the leaving group at neutral or slightly basic pH. The proteasome has an ATP-dependent proteolytic activity. The polypeptide is Proteasome subunit alpha type-5-A (PAE1) (Arabidopsis thaliana (Mouse-ear cress)).